Reading from the N-terminus, the 348-residue chain is Aldose 1-epimerase (348 aa).

Residue Arg-80 coordinates substrate. Residue His-180 is the Proton donor of the active site. Asp-243 is a substrate binding site. Glu-311 (proton acceptor) is an active-site residue.

It belongs to the aldose epimerase family.

It catalyses the reaction alpha-D-glucose = beta-D-glucose. The protein operates within carbohydrate metabolism; hexose metabolism. In terms of biological role, mutarotase converts alpha-aldose to the beta-anomer. It is active on D-glucose, L-arabinose, D-xylose, D-galactose, maltose and lactose. In Streptococcus thermophilus, this protein is Aldose 1-epimerase (galM).